The primary structure comprises 90 residues: Defensin-like protein 293 (90 aa).

The first 26 residues, 1–26 (MTSRAKSLFIFFFLISCTFMLLETDA), serve as a signal peptide directing secretion. 3 disulfides stabilise this stretch: cysteine 63–cysteine 83, cysteine 69–cysteine 88, and cysteine 75–cysteine 90.

This sequence belongs to the DEFL family.

It localises to the secreted. In Arabidopsis thaliana (Mouse-ear cress), this protein is Defensin-like protein 293.